A 93-amino-acid chain; its full sequence is Large ribosomal subunit protein uL23cz/uL23cy (93 aa).

Belongs to the universal ribosomal protein uL23 family. In terms of assembly, part of the 50S ribosomal subunit.

It is found in the plastid. The protein localises to the chloroplast. Its function is as follows. Binds to 23S rRNA. The sequence is that of Large ribosomal subunit protein uL23cz/uL23cy (rpl23-A) from Helianthus annuus (Common sunflower).